The primary structure comprises 587 residues: Putative ankyrin repeat protein L66 (587 aa).

ANK repeat units lie at residues 77 to 106 (DKNL…DIRI), 108 to 136 (NNYP…DVSD), 137 to 166 (YDNY…DVHC), 168 to 196 (DNAP…DVNY), 199 to 228 (NEDL…NIHF), 230 to 256 (DSLI…ILGN), 259 to 288 (NIRN…SIEN), 302 to 331 (FKKN…NVAF), 333 to 360 (DNLP…NVKI), 361 to 390 (NYEN…NVKD), 392 to 418 (TAIY…DLIK), 420 to 448 (HNEI…INKS), 449 to 478 (IYDK…DIKS), 480 to 507 (KFHD…KINN), 509 to 537 (YKNL…NMKC), and 539 to 567 (RIDT…KLIC).

This is Putative ankyrin repeat protein L66 from Acanthamoeba polyphaga mimivirus (APMV).